The chain runs to 369 residues: Phenylalanine--tRNA ligase alpha subunit (369 aa).

Position 269 (glutamate 269) interacts with Mg(2+).

It belongs to the class-II aminoacyl-tRNA synthetase family. Phe-tRNA synthetase alpha subunit type 1 subfamily. As to quaternary structure, tetramer of two alpha and two beta subunits. Requires Mg(2+) as cofactor.

It is found in the cytoplasm. It carries out the reaction tRNA(Phe) + L-phenylalanine + ATP = L-phenylalanyl-tRNA(Phe) + AMP + diphosphate + H(+). This is Phenylalanine--tRNA ligase alpha subunit from Brucella melitensis biotype 1 (strain ATCC 23456 / CCUG 17765 / NCTC 10094 / 16M).